A 342-amino-acid chain; its full sequence is Uroporphyrinogen decarboxylase (342 aa).

Residues R24–R28, D74, Y149, S204, and H319 each bind substrate.

It belongs to the uroporphyrinogen decarboxylase family. As to quaternary structure, homodimer.

The protein resides in the cytoplasm. It carries out the reaction uroporphyrinogen III + 4 H(+) = coproporphyrinogen III + 4 CO2. It participates in porphyrin-containing compound metabolism; protoporphyrin-IX biosynthesis; coproporphyrinogen-III from 5-aminolevulinate: step 4/4. Catalyzes the decarboxylation of four acetate groups of uroporphyrinogen-III to yield coproporphyrinogen-III. This Chelativorans sp. (strain BNC1) protein is Uroporphyrinogen decarboxylase.